A 366-amino-acid polypeptide reads, in one-letter code: Homer protein homolog 1 (366 aa).

The WH1 domain occupies 1 to 110; sequence MGEQPIFSTR…EKFQEFKEAA (110 aa). The residue at position 2 (G2) is an N-acetylglycine. Residues 114–189 form a disordered region; that stretch reads KEKSQEKMEL…RTQGLSHASS (76 aa). Positions 138–147 are enriched in polar residues; the sequence is SPLTPESING. Residues 193–364 adopt a coiled-coil conformation; that stretch reads KHWEAELATL…LRDNLAKLLE (172 aa). Residues 302–366 are required for tetramerization; the sequence is KLQEVEIRNK…DNLAKLLECS (65 aa). S318 carries the phosphoserine modification.

Belongs to the Homer family. In terms of assembly, tetramer; this tetrameric structure is critical for forming the high-order complex with SHANK1, which in turn is necessary for the structural and functional integrity of dendritic spines. Interacts with GRM1, GRM5, ITPR1, DYN3, RYR1, RYR2 and SHANK3. Interacts with IFT57 and OPHN1. Isoform 1 and isoform 2 encode coiled-coil structures that mediate homo- and heteromultimerization. Interacts with SHANK1; forms high-order polymerized complex with a mesh-like network structure, at least composed of SHANK1, HOMER1 and DLGAP1; the complex formation is SHANK1 multimerization dependent. Interacts with NFATC4. Interacts with DAGLA (via PPXXF motif); this interaction is required for the cell membrane localization of DAGLA. Interacts with SRGAP2. Highly expressed in cortex, Purkinje cells of the cerebellum, hippocampus, striatum and olfactory bulb. Isoform 1 and isoform 3 are expressed in skeletal and cardiac muscle.

The protein localises to the cytoplasm. It localises to the postsynaptic density. The protein resides in the synapse. It is found in the cell projection. Its subcellular location is the dendritic spine. Its function is as follows. Postsynaptic density scaffolding protein. Binds and cross-links cytoplasmic regions of GRM1, GRM5, ITPR1, DNM3, RYR1, RYR2, SHANK1 and SHANK3. By physically linking GRM1 and GRM5 with ER-associated ITPR1 receptors, it aids the coupling of surface receptors to intracellular calcium release. May also couple GRM1 to PI3 kinase through its interaction with AGAP2. Differentially regulates the functions of the calcium activated channel ryanodine receptors RYR1 and RYR2. Isoform 1 decreases the activity of RYR2, and increases the activity of RYR1, whereas isoform 3 counteracts the effects by competing for binding sites. Isoform 1 regulates the trafficking and surface expression of GRM5. Isoform 3 acts as a natural dominant negative, in dynamic competition with constitutively expressed isoform 1, and isoform 2 to regulate synaptic metabotropic glutamate function. Isoform 3, may be involved in the structural changes that occur at synapses during long-lasting neuronal plasticity and development. Forms a high-order complex with SHANK1, which in turn is necessary for the structural and functional integrity of dendritic spines. Negatively regulates T cell activation by inhibiting the calcineurin-NFAT pathway. Acts by competing with calcineurin/PPP3CA for NFAT protein binding, hence preventing NFAT activation by PPP3CA. This chain is Homer protein homolog 1, found in Rattus norvegicus (Rat).